The sequence spans 116 residues: MLSCRLQCALAALSIVLALGGVTCAPSDPRLRQFLQKSLAAAAGKQELAKYFLAELLSEPNQTENDALEPEDLSQAAEQDEMRLELQRSANSNPAMAPRERKAGCKNFFWKTFTSC.

The first 24 residues, 1-24 (MLSCRLQCALAALSIVLALGGVTC), serve as a signal peptide directing secretion. Residues 25-88 (APSDPRLRQF…QDEMRLELQR (64 aa)) constitute a propeptide that is removed on maturation. Alanine amide is present on A43. A disordered region spans residues 62-99 (QTENDALEPEDLSQAAEQDEMRLELQRSANSNPAMAPR). C105 and C116 form a disulfide bridge.

It belongs to the somatostatin family. C-terminal amidation of the neuronostatin peptide is required for its biological activity, including for the regulation of mean arterial pressure.

Its subcellular location is the secreted. In terms of biological role, inhibits the secretion of pituitary hormones, including that of growth hormone/somatotropin (GH1), PRL, ACTH, luteinizing hormone (LH) and TSH. Also impairs ghrelin- and GnRH-stimulated secretion of GH1 and LH; the inhibition of ghrelin-stimulated secretion of GH1 can be further increased by neuronostatin. Its function is as follows. May enhance low-glucose-induced glucagon release by pancreatic alpha cells. This effect may be mediated by binding to GPR107 and PKA activation. May regulate cardiac contractile function. May compromise cardiomyocyte viability. In the central nervous system, may impair memory retention and may affect hippocampal excitability. May also have anxiolytic and anorexigenic effects. May play a role in arterial pressure regulation. May inhibit basal, but not ghrelin- or GnRH-stimulated secretion of GH1 or LH, but does not affect the release of other pituitary hormones, including PRL, ACTH, FSH or TSH. Potentiates inhibitory action of somatostatin on ghrelin-stimulated secretion of GH1, but not that on GnRH-stimulated secretion of LH. The polypeptide is Somatostatin (SST) (Canis lupus familiaris (Dog)).